Consider the following 402-residue polypeptide: Sulfate adenylyltransferase (402 aa).

This sequence belongs to the sulfate adenylyltransferase family.

The catalysed reaction is sulfate + ATP + H(+) = adenosine 5'-phosphosulfate + diphosphate. It functions in the pathway sulfur metabolism; hydrogen sulfide biosynthesis; sulfite from sulfate: step 1/3. This is Sulfate adenylyltransferase from Vesicomyosocius okutanii subsp. Calyptogena okutanii (strain HA).